Here is a 397-residue protein sequence, read N- to C-terminus: MKILVVNCGSSSLKYQLIDMTSEEALAKGLVERIGIEGSILTQKVNGEKYIIEEPMKDHKKAIELVLKALVDKEHGVISDMSEIAAVGHRVVHGGEKYASSVLIDDEVMEALEDCVKLAPLHNPPNIIGINACRELMPKTPMVAVFDTAFHQTLPDYAYMYPLPYELYEQNGIRKYGFHGTSHRYVSSVASEMMGKDLKDLKVITCHLGNGASLCAVKEGKSVETSMGFTPLAGLAMGTRCGDIDPAILLFMERELKMSPDEVDTVINKKSGVLGISGVSSDFRDIEGAAEEGNKRAKLALDVYHYTVRQTIGAYTAVLNGVDAIVFTAGLGENSAASREEILNGLEYLGIKIDAEKNKQRGKQIEISTEDSKVKVFVIPTDEELMIARDTKEITAK.

N7 lines the Mg(2+) pocket. Position 14 (K14) interacts with ATP. Residue R90 participates in substrate binding. The Proton donor/acceptor role is filled by D147. ATP is bound by residues 207-211 (HLGNG), 282-284 (DFR), and 330-334 (GLGEN). Residue E383 coordinates Mg(2+).

This sequence belongs to the acetokinase family. As to quaternary structure, homodimer. Requires Mg(2+) as cofactor. It depends on Mn(2+) as a cofactor.

Its subcellular location is the cytoplasm. The catalysed reaction is acetate + ATP = acetyl phosphate + ADP. Its pathway is metabolic intermediate biosynthesis; acetyl-CoA biosynthesis; acetyl-CoA from acetate: step 1/2. Functionally, catalyzes the formation of acetyl phosphate from acetate and ATP. Can also catalyze the reverse reaction. The polypeptide is Acetate kinase (Clostridium botulinum (strain 657 / Type Ba4)).